Consider the following 283-residue polypeptide: Orotidine 5'-phosphate decarboxylase (283 aa).

The active-site Proton donor is the lysine 97.

Belongs to the OMP decarboxylase family. Type 2 subfamily.

The catalysed reaction is orotidine 5'-phosphate + H(+) = UMP + CO2. It functions in the pathway pyrimidine metabolism; UMP biosynthesis via de novo pathway; UMP from orotate: step 2/2. The protein is Orotidine 5'-phosphate decarboxylase of Clostridium botulinum (strain Loch Maree / Type A3).